The chain runs to 166 residues: UPF0179 protein Tneu_1978 (166 aa).

Residues 140–166 are disordered; that stretch reads PPSPSKSGGATASRDPSRAPPSRPLSK. Positions 157-166 are enriched in pro residues; sequence RAPPSRPLSK.

This sequence belongs to the UPF0179 family.

The chain is UPF0179 protein Tneu_1978 from Pyrobaculum neutrophilum (strain DSM 2338 / JCM 9278 / NBRC 100436 / V24Sta) (Thermoproteus neutrophilus).